The following is a 362-amino-acid chain: Peptide chain release factor 1 (362 aa).

Glutamine 237 bears the N5-methylglutamine mark.

It belongs to the prokaryotic/mitochondrial release factor family. Post-translationally, methylated by PrmC. Methylation increases the termination efficiency of RF1.

The protein localises to the cytoplasm. In terms of biological role, peptide chain release factor 1 directs the termination of translation in response to the peptide chain termination codons UAG and UAA. This Aeromonas salmonicida (strain A449) protein is Peptide chain release factor 1.